We begin with the raw amino-acid sequence, 598 residues long: MNKLYIGNLNEKVTAEDLVKTFEDYKIPYSGQFLMKTGYASVDCPDDQWAMKAIETFSGKVELHGKRIEVEHSVPKKQRTRKLQIRNIPPHLQWEVLDGLLAQYGTVENCEQVNTDSETAVVNVTYGTREQARQAIQKLNGYQFDNNALRVSYIPDENSEVDSQRGPDNGRRPGYGPRGTSRQMSPGSGIPSKHQHADIPLRLLVPTQYVGAIIGKEGATIRNITKQTQSKIDVHRKENAGAAEKPISIHSTPEGCSAACRMILEIMNQEAKDTKTADEVPLKVLAHNNFVGRLIGKEGRNLKKVEQDTDTKITISPLQDLTLYNPERTITVKGSIEACCLAEQEIMKKVREAYDNDIAAMNQQTHLIPGLNLGAIGLFPPSSAMPPPALGNSVPGPPYGPMGASEQETVHVYIPAQAVGALIGKKGQHIKQLSRFAGASIKIAPAEAPDSKMRMVIVTGPPEAQFKAQGRIYGKLKEENFFGPKEEVKLETHIKVAAAAAGRVIGKGGKTVNELQNLTAAEVVVPREQTPDEHDQVIVKIIGHFYASQLAQRKIRDILTQVKQQQKGGGMGTPQGPHPQGMTELGSPQGLAQEPRRK.

RRM domains are found at residues 2 to 75 (NKLY…HSVP) and 81 to 156 (RKLQ…YIPD). The disordered stretch occupies residues 155 to 195 (PDENSEVDSQRGPDNGRRPGYGPRGTSRQMSPGSGIPSKHQ). Residues 162-171 (DSQRGPDNGR) are compositionally biased toward basic and acidic residues. Position 185 is a phosphoserine (S185). 2 KH domains span residues 198–263 (DIPL…CRMI) and 279–346 (EVPL…EQEI). Phosphotyrosine is present on Y399. 2 KH domains span residues 407-472 (QETV…QGRI) and 489-555 (KLET…QRKI). The tract at residues 561–598 (QVKQQQKGGGMGTPQGPHPQGMTELGSPQGLAQEPRRK) is disordered. A phosphothreonine mark is found at T573 and T583. Over residues 574 to 583 (PQGPHPQGMT) the composition is skewed to low complexity. S587 is modified (phosphoserine).

Belongs to the RRM IMP/VICKZ family. In terms of assembly, component of the CRD-mediated complex.

The protein resides in the nucleus. The protein localises to the cytoplasm. It is found in the perinuclear region. Its subcellular location is the P-body. It localises to the stress granule. The protein resides in the cell projection. The protein localises to the growth cone. It is found in the filopodium. Its subcellular location is the lamellipodium. In terms of biological role, RNA-binding factor that recruits target transcripts to cytoplasmic protein-RNA complexes (mRNPs). This transcript 'caging' into mRNPs allows mRNA transport and transient storage. It also modulates the rate and location at which target transcripts encounter the translational apparatus and shields them from endonuclease attacks or microRNA-mediated degradation. Preferentially binds to N6-methyladenosine (m6A)-containing mRNAs and increases their stability. Plays a direct role in the transport and translation of transcripts required for axonal regeneration in adult sensory neurons. Regulates localized beta-actin/ACTB mRNA translation in polarized cells, a crucial process for cell migration and neurite outgrowth. Promotes the directed movement of cells by fine-tuning intracellular signaling networks and enhances the velocity of cell migration. In Danio rerio (Zebrafish), this protein is Insulin-like growth factor 2 mRNA-binding protein 1 (igf2bp1).